Consider the following 801-residue polypeptide: Transferrin receptor protein 2 (801 aa).

At 1–83 (MERLWGLFQR…WAAAGRRAAP (83 aa)) the chain is on the cytoplasmic side. Residues 16–45 (PRSSQTVYQRVEGPRKGHLEEEEEDGEEGA) are disordered. The Endocytosis signal signature appears at 23 to 26 (YQRV). The span at 35 to 45 (EEEEEDGEEGA) shows a compositional bias: acidic residues. The chain crosses the membrane as a helical; Signal-anchor for type II membrane protein span at residues 84–104 (YLVLTALLIFTGAFLLGYVAF). Residues 105-801 (RGSCQACGDS…GDVWNIDNNF (697 aa)) are Extracellular-facing. Residues Asn240, Asn339, Asn540, and Asn754 are each glycosylated (N-linked (GlcNAc...) asparagine).

Belongs to the peptidase M28 family. M28B subfamily. Homodimer. In terms of tissue distribution, predominantly expressed in liver. While the alpha form is also expressed in spleen, lung, muscle, prostate and peripheral blood mononuclear cells, the beta form is expressed in all tissues tested, albeit weakly.

Its subcellular location is the cell membrane. The protein resides in the cytoplasm. Its function is as follows. Mediates cellular uptake of transferrin-bound iron in a non-iron dependent manner. May be involved in iron metabolism, hepatocyte function and erythrocyte differentiation. This is Transferrin receptor protein 2 (TFR2) from Homo sapiens (Human).